The chain runs to 228 residues: 2,3-bisphosphoglycerate-dependent phosphoglycerate mutase (228 aa).

Residues 8-15, 21-22, Arg60, 87-90, Lys98, 114-115, and 183-184 contribute to the substrate site; these read RHGLSEWN, TG, ERHY, RR, and GN. Residue His9 is the Tele-phosphohistidine intermediate of the active site. Catalysis depends on Glu87, which acts as the Proton donor/acceptor.

It belongs to the phosphoglycerate mutase family. BPG-dependent PGAM subfamily.

It carries out the reaction (2R)-2-phosphoglycerate = (2R)-3-phosphoglycerate. Its pathway is carbohydrate degradation; glycolysis; pyruvate from D-glyceraldehyde 3-phosphate: step 3/5. Functionally, catalyzes the interconversion of 2-phosphoglycerate and 3-phosphoglycerate. The protein is 2,3-bisphosphoglycerate-dependent phosphoglycerate mutase of Enterococcus faecalis (strain ATCC 700802 / V583).